A 270-amino-acid chain; its full sequence is MAAWANGVRAVLLDVSGVLYDSGGAGGGSAIQGSVDAVNRIRHAGLKLRFCTNESQATRSHFAQKLKRFGFSISEEEVTAPGPAATRLMKERGLRPHLLVHNDLLPEFESVEKSDPNCVLIGDAAENFSYKNVNRAFQVLINLQKPVLISLGKGRYYKETDGLKLDVGAYMKALEYACDIKAEVVGKPSPNFFLSALEEMGAKPEEALMIGDDIVHDIGGAKSCGLRAVLVRTGKYRPSDEKHPEVTADGYVNNLAHAVDILLASQDCNQ.

Positions 14 and 16 each coordinate Mg(2+). Substrate-binding positions include 14–16, 52–53, and K187; these read DVS and TN. D212 provides a ligand contact to Mg(2+).

Belongs to the HAD-like hydrolase superfamily. The cofactor is Mg(2+).

The protein localises to the cytoplasm. Its subcellular location is the nucleus. The enzyme catalyses diphosphate + H2O = 2 phosphate + H(+). Its function is as follows. Phosphatase that hydrolyzes imidodiphosphate, 3-phosphohistidine and 6-phospholysine. Has broad substrate specificity and can also hydrolyze inorganic diphosphate, but with lower efficiency. This Xenopus laevis (African clawed frog) protein is Phospholysine phosphohistidine inorganic pyrophosphate phosphatase (lhpp).